A 908-amino-acid polypeptide reads, in one-letter code: Metabotropic glutamate receptor 8 (908 aa).

Residues 1–33 (MVCEGKRSTSCPCFFLLTAKFYWILTMMQRTHS) form the signal peptide. Topologically, residues 34-583 (QEYAHSIRLD…IIKLEWHSPW (550 aa)) are extracellular. A disulfide bridge links cysteine 64 with cysteine 106. Asparagine 95 carries N-linked (GlcNAc...) asparagine glycosylation. L-glutamate is bound by residues serine 156, 177–179 (AST), and tyrosine 227. 7 disulfides stabilise this stretch: cysteine 246–cysteine 534, cysteine 369–cysteine 384, cysteine 424–cysteine 431, cysteine 516–cysteine 535, cysteine 520–cysteine 538, cysteine 541–cysteine 553, and cysteine 556–cysteine 569. Asparagine 298 is a glycosylation site (N-linked (GlcNAc...) asparagine). Position 309 (aspartate 309) interacts with L-glutamate. Position 401 (lysine 401) interacts with L-glutamate. 2 N-linked (GlcNAc...) asparagine glycosylation sites follow: asparagine 452 and asparagine 480. N-linked (GlcNAc...) asparagine glycosylation occurs at asparagine 565. Residues 584-608 (AVVPVFIAILGIIATTFVIVTFVRY) traverse the membrane as a helical segment. The Cytoplasmic segment spans residues 609 to 620 (NDTPIVRASGRE). A helical membrane pass occupies residues 621–641 (LSYVLLTGIFLCYSITFLMIA). At 642 to 647 (APDTII) the chain is on the extracellular side. A helical membrane pass occupies residues 648-668 (CSFRRIFLGLGMCFSYAALLT). Residues 669 to 695 (KTNRIHRIFEQGKKSVTAPKFISPASQ) lie on the Cytoplasmic side of the membrane. The chain crosses the membrane as a helical span at residues 696-716 (LVITFSLISVQLLGVFVWFVV). At 717 to 746 (DPPHTIIDYGEQRTLDPENARGVLKCDISD) the chain is on the extracellular side. Residues 747–768 (LSLICSLGYSILLMVTCTVYAI) form a helical membrane-spanning segment. The Cytoplasmic portion of the chain corresponds to 769-781 (KTRGVPETFNEAK). The helical transmembrane segment at 782–803 (PIGFTMYTTCIIWLAFIPIFFG) threads the bilayer. Residues 804–818 (TAQSAEKMYIQTTTL) lie on the Extracellular side of the membrane. A helical transmembrane segment spans residues 819–843 (TVSMSLSASVSLGMLYMPKVYIIIF). Topologically, residues 844–908 (HPEQNVQKRK…TYISYSNHSI (65 aa)) are cytoplasmic. Lysine 882 is covalently cross-linked (Glycyl lysine isopeptide (Lys-Gly) (interchain with G-Cter in SUMO1)).

Belongs to the G-protein coupled receptor 3 family. Interacts with PICK1. Strongly expressed in olfactory bulb, accessory olfactory bulb, and mammillary body. Weaker expression in the retina, and in scattered cells in the cortex and hindbrain.

The protein resides in the cell membrane. In terms of biological role, G-protein coupled receptor for glutamate. Ligand binding causes a conformation change that triggers signaling via guanine nucleotide-binding proteins (G proteins) and modulates the activity of down-stream effectors. Signaling inhibits adenylate cyclase activity. The polypeptide is Metabotropic glutamate receptor 8 (Grm8) (Mus musculus (Mouse)).